Reading from the N-terminus, the 270-residue chain is Putative phosphoenolpyruvate synthase regulatory protein (270 aa).

Residue 151–158 (GVSRCGKT) coordinates ADP.

The protein belongs to the pyruvate, phosphate/water dikinase regulatory protein family. PSRP subfamily.

The enzyme catalyses [pyruvate, water dikinase] + ADP = [pyruvate, water dikinase]-phosphate + AMP + H(+). The catalysed reaction is [pyruvate, water dikinase]-phosphate + phosphate + H(+) = [pyruvate, water dikinase] + diphosphate. Functionally, bifunctional serine/threonine kinase and phosphorylase involved in the regulation of the phosphoenolpyruvate synthase (PEPS) by catalyzing its phosphorylation/dephosphorylation. The protein is Putative phosphoenolpyruvate synthase regulatory protein of Methylobacillus flagellatus (strain ATCC 51484 / DSM 6875 / VKM B-1610 / KT).